Consider the following 333-residue polypeptide: D-2-hydroxyacid dehydrogenase (NAD+) (333 aa).

4-methyl-2-oxopentanoate is bound at residue tyrosine 100. NAD(+) is bound by residues histidine 155, isoleucine 156, aspartate 175, valine 205, asparagine 211, threonine 232, arginine 234, and aspartate 258. Arginine 234 is a catalytic residue. Glutamate 263 is a catalytic residue. Histidine 295 provides a ligand contact to 4-methyl-2-oxopentanoate. Histidine 295 functions as the Proton donor in the catalytic mechanism.

Belongs to the D-isomer specific 2-hydroxyacid dehydrogenase family. In terms of assembly, homodimer.

It catalyses the reaction a (2R)-2-hydroxycarboxylate + NAD(+) = a 2-oxocarboxylate + NADH + H(+). The catalysed reaction is (2R)-hydroxy-4-methylpentanoate + NAD(+) = 4-methyl-2-oxopentanoate + NADH + H(+). The enzyme catalyses (R)-3-phenyllactate + NAD(+) = 3-phenylpyruvate + NADH + H(+). Its activity is regulated as follows. Completely inhibited In the presence of 0.1 mM Hg(2+). No influence on the activity could be detected with Mg(2+) and Ca(2+) and only very weak effects with Cd(2+), Co(2+) and Mn(2+). Reducing agents and thiol group reagents do not affect catalytic activity. Catalyzes the NADH-dependent reversible reduction of various 2-ketocarboxylic acids to the corresponding D-2-hydroxycarboxylic acids. In vitro can use various substrates, including 4-methyl-2-oxopentanoate (2-oxoisocaproate), 2-oxopentanoate, 2-oxohexanoate and phenylpyruvate. This is D-2-hydroxyacid dehydrogenase (NAD+) from Lacticaseibacillus paracasei (Lactobacillus paracasei).